Consider the following 83-residue polypeptide: MKTLLLTLVVVTMVCLDLAYTRRCYNQQSSQPKTTKSCPPGENSCYNKQWRDHRGSITERGCGCPKVKPGIKLRCCESEDCNN.

An N-terminal signal peptide occupies residues 1–21 (MKTLLLTLVVVTMVCLDLAYT). 4 disulfides stabilise this stretch: Cys24–Cys45, Cys38–Cys62, Cys64–Cys75, and Cys76–Cys81.

The protein belongs to the three-finger toxin family. Short-chain subfamily. Type I alpha-neurotoxin sub-subfamily. In terms of tissue distribution, expressed by the venom gland.

It localises to the secreted. Its function is as follows. Binds to muscle nicotinic acetylcholine receptor (nAChR) and inhibit acetylcholine from binding to the receptor, thereby impairing neuromuscular transmission. The polypeptide is Short neurotoxin C (Laticauda colubrina (Yellow-lipped sea krait)).